Here is a 391-residue protein sequence, read N- to C-terminus: Formate-dependent phosphoribosylglycinamide formyltransferase (391 aa).

N(1)-(5-phospho-beta-D-ribosyl)glycinamide is bound by residues 18 to 19 (EL) and Glu-78. Residues Arg-110, Lys-151, 156–161 (SSGKGQ), 191–194 (EEFI), and Glu-199 contribute to the ATP site. One can recognise an ATP-grasp domain in the interval 115–305 (DLAAQQLGLR…EFELHLRAVL (191 aa)). Residues Glu-264 and Glu-276 each coordinate Mg(2+). Residues Asp-283, Lys-353, and 360–361 (RR) contribute to the N(1)-(5-phospho-beta-D-ribosyl)glycinamide site.

The protein belongs to the PurK/PurT family. Homodimer.

The catalysed reaction is N(1)-(5-phospho-beta-D-ribosyl)glycinamide + formate + ATP = N(2)-formyl-N(1)-(5-phospho-beta-D-ribosyl)glycinamide + ADP + phosphate + H(+). It participates in purine metabolism; IMP biosynthesis via de novo pathway; N(2)-formyl-N(1)-(5-phospho-D-ribosyl)glycinamide from N(1)-(5-phospho-D-ribosyl)glycinamide (formate route): step 1/1. In terms of biological role, involved in the de novo purine biosynthesis. Catalyzes the transfer of formate to 5-phospho-ribosyl-glycinamide (GAR), producing 5-phospho-ribosyl-N-formylglycinamide (FGAR). Formate is provided by PurU via hydrolysis of 10-formyl-tetrahydrofolate. The chain is Formate-dependent phosphoribosylglycinamide formyltransferase from Synechococcus elongatus (strain ATCC 33912 / PCC 7942 / FACHB-805) (Anacystis nidulans R2).